The primary structure comprises 867 residues: Probable alpha,alpha-trehalose-phosphate synthase [UDP-forming] 9 (867 aa).

The residue at position 5 (Ser5) is a Phosphoserine. Thr32 is subject to Phosphothreonine. The segment at 59 to 546 (ERKIIVANML…AKSFMQDLER (488 aa)) is glycosyltransferase.

It in the N-terminal section; belongs to the glycosyltransferase 20 family. The protein in the C-terminal section; belongs to the trehalose phosphatase family.

It carries out the reaction D-glucose 6-phosphate + UDP-alpha-D-glucose = alpha,alpha-trehalose 6-phosphate + UDP + H(+). This is Probable alpha,alpha-trehalose-phosphate synthase [UDP-forming] 9 (TPS9) from Arabidopsis thaliana (Mouse-ear cress).